The sequence spans 156 residues: NADH-ubiquinone oxidoreductase 20 kDa subunit (156 aa).

[4Fe-4S] cluster is bound by residues C33, C34, C98, and C128.

It belongs to the complex I 20 kDa subunit family. Requires [4Fe-4S] cluster as cofactor.

Its subcellular location is the mitochondrion. It catalyses the reaction a ubiquinone + NADH + 5 H(+)(in) = a ubiquinol + NAD(+) + 4 H(+)(out). This Paramecium tetraurelia protein is NADH-ubiquinone oxidoreductase 20 kDa subunit (NAD10).